The sequence spans 265 residues: Indole-3-glycerol phosphate synthase (265 aa).

It belongs to the TrpC family.

It catalyses the reaction 1-(2-carboxyphenylamino)-1-deoxy-D-ribulose 5-phosphate + H(+) = (1S,2R)-1-C-(indol-3-yl)glycerol 3-phosphate + CO2 + H2O. It functions in the pathway amino-acid biosynthesis; L-tryptophan biosynthesis; L-tryptophan from chorismate: step 4/5. This chain is Indole-3-glycerol phosphate synthase, found in Syntrophobacter fumaroxidans (strain DSM 10017 / MPOB).